Here is a 748-residue protein sequence, read N- to C-terminus: Photosystem I P700 chlorophyll a apoprotein A1 (748 aa).

8 helical membrane passes run 69-92 (IFSA…FHGA), 155-178 (LYVT…FHYH), 194-218 (LNHH…HVSL), 290-308 (VAHH…GHMY), 345-368 (WHAN…HHMY), 384-410 (LSLF…IYMV), 432-454 (AIIS…LYIH), and 529-547 (FMVH…LILL). Residues cysteine 571 and cysteine 580 each contribute to the [4Fe-4S] cluster site. Transmembrane regions (helical) follow at residues 587 to 608 (HVFL…HFSW) and 662 to 684 (LSAY…MFLF). A chlorophyll a'-binding site is contributed by histidine 673. Chlorophyll a contacts are provided by methionine 681 and tyrosine 689. Tryptophan 690 is a phylloquinone binding site. A helical transmembrane segment spans residues 722 to 742 (AVGVAHYLLGGIATTWAFFLA).

The protein belongs to the PsaA/PsaB family. As to quaternary structure, the PsaA/B heterodimer binds the P700 chlorophyll special pair and subsequent electron acceptors. PSI consists of a core antenna complex that captures photons, and an electron transfer chain that converts photonic excitation into a charge separation. The eukaryotic PSI reaction center is composed of at least 11 subunits. P700 is a chlorophyll a/chlorophyll a' dimer, A0 is one or more chlorophyll a, A1 is one or both phylloquinones and FX is a shared 4Fe-4S iron-sulfur center. serves as cofactor.

The protein resides in the plastid. The protein localises to the chloroplast thylakoid membrane. It catalyses the reaction reduced [plastocyanin] + hnu + oxidized [2Fe-2S]-[ferredoxin] = oxidized [plastocyanin] + reduced [2Fe-2S]-[ferredoxin]. Its function is as follows. PsaA and PsaB bind P700, the primary electron donor of photosystem I (PSI), as well as the electron acceptors A0, A1 and FX. PSI is a plastocyanin/cytochrome c6-ferredoxin oxidoreductase, converting photonic excitation into a charge separation, which transfers an electron from the donor P700 chlorophyll pair to the spectroscopically characterized acceptors A0, A1, FX, FA and FB in turn. Oxidized P700 is reduced on the lumenal side of the thylakoid membrane by plastocyanin or cytochrome c6. The sequence is that of Photosystem I P700 chlorophyll a apoprotein A1 from Cyanidioschyzon merolae (strain NIES-3377 / 10D) (Unicellular red alga).